The sequence spans 117 residues: Large ribosomal subunit protein uL22 (117 aa).

The protein belongs to the universal ribosomal protein uL22 family. In terms of assembly, part of the 50S ribosomal subunit.

Its function is as follows. This protein binds specifically to 23S rRNA; its binding is stimulated by other ribosomal proteins, e.g. L4, L17, and L20. It is important during the early stages of 50S assembly. It makes multiple contacts with different domains of the 23S rRNA in the assembled 50S subunit and ribosome. Functionally, the globular domain of the protein is located near the polypeptide exit tunnel on the outside of the subunit, while an extended beta-hairpin is found that lines the wall of the exit tunnel in the center of the 70S ribosome. This Leptospira biflexa serovar Patoc (strain Patoc 1 / ATCC 23582 / Paris) protein is Large ribosomal subunit protein uL22.